The sequence spans 233 residues: C-type lectin domain-containing protein 87 (233 aa).

The signal sequence occupies residues 1 to 20 (MRFFRFLVFPVIAGLSSVLA). Asparagine 26 carries an N-linked (GlcNAc...) asparagine glycan. O-linked (Xyl...) (chondroitin sulfate) serine glycosylation is present at serine 32. N-linked (GlcNAc...) asparagine glycosylation is present at asparagine 81. The 131-residue stretch at 93-223 (FADSCYWIET…CTYLLYSICE (131 aa)) folds into the C-type lectin domain. Intrachain disulfides connect cysteine 114-cysteine 222 and cysteine 193-cysteine 214. The N-linked (GlcNAc...) asparagine glycan is linked to asparagine 225.

The polypeptide is C-type lectin domain-containing protein 87 (Caenorhabditis briggsae).